Consider the following 275-residue polypeptide: Leucine-rich repeat-containing protein 3C (275 aa).

An N-terminal signal peptide occupies residues 1–41; it reads MRMTSSSFVSYCTPGLCQFMAMLPTAGHLLPLLLVIGTGGT. Residues 42–79 enclose the LRRNT domain; the sequence is VPSPQVPPRGCYVAKEAGERTFRCSQAGLSAVPSGIPN. LRR repeat units lie at residues 80–101, 104–125, and 129–150; these read DTRK…AFQH, VLEE…AFQG, and TLRH…AFVG. Asn-156 carries an N-linked (GlcNAc...) asparagine glycan. Residues 160–212 enclose the LRRCT domain; it reads NPWHCDCALQEVLRQVRLVPGTGTGIVCGSGARPDLVGQEFLLLAGEEELCGS. The helical transmembrane segment at 225–245 threads the bilayer; sequence LLVTMGGWLTLMVAYLVHYVW.

Belongs to the LRRC3 family.

The protein localises to the membrane. In Homo sapiens (Human), this protein is Leucine-rich repeat-containing protein 3C (LRRC3C).